A 313-amino-acid chain; its full sequence is Zinc transporter ZitB (313 aa).

The Cytoplasmic portion of the chain corresponds to 1–20; the sequence is MAHSHSHTSSHLPEDNNARR. A helical membrane pass occupies residues 21–41; that stretch reads LLYAFGVTAGFMLVEVVGGFL. At 42–47 the chain is on the periplasmic side; sequence SGSLAL. Residues 48 to 68 traverse the membrane as a helical segment; it reads LADAGHMLTDTAALLFALLAV. Residues 69–89 lie on the Cytoplasmic side of the membrane; that stretch reads QFSRRPPTIRHTFGWLRLTTL. Residues 90-110 form a helical membrane-spanning segment; the sequence is AAFVNAIALVVITILIVWEAI. Topologically, residues 111 to 121 are periplasmic; the sequence is ERFRTPRPVEG. The chain crosses the membrane as a helical span at residues 122–142; that stretch reads GMMMAIAVAGLLANILSFWLL. Residues 143–159 are Cytoplasmic-facing; sequence HHGSEEKNLNVRAAALH. Residues 160 to 180 traverse the membrane as a helical segment; it reads VLGDLLGSVGAIIAALIIIWT. Position 181 (glycine 181) is a topological domain, periplasmic. The helical transmembrane segment at 182-202 threads the bilayer; sequence WTPADPILSILVSLLVLRSAW. The Cytoplasmic portion of the chain corresponds to 203–313; it reads RLLKDSVNEL…GVSGHSHHHH (111 aa).

This sequence belongs to the cation diffusion facilitator (CDF) transporter (TC 2.A.4) family. SLC30A subfamily.

Its subcellular location is the cell inner membrane. Involved in zinc efflux across the cytoplasmic membrane, thus reducing zinc accumulation in the cytoplasm and rendering bacteria more resistant to zinc. It may contribute to zinc homeostasis at low concentrations of zinc, whereas ZntA is required for growth at more toxic concentrations. The sequence is that of Zinc transporter ZitB (zitB) from Escherichia coli (strain K12).